We begin with the raw amino-acid sequence, 376 residues long: MRSPHRDAIRTARGLVVKVGTTALTTPSGMFDAGRLAGLAEAVERRMKAGSDVVIVSSGAIAAGIEPLGLSRRPKDLATKQAAASVGQVALVNSWSAAFARYGRTVGQVLLTAHDISMRVQHTNAQRTLDRLRALHAVAIVNENDTVATNEIRFGDNDRLSALVAHLVGADALVLLSDIDGLYDCDPRKTADATFIPEVSGPADLDGVVAGRSSHLGTGGMASKVSAALLAADAGVPVLLAPAADAATALADASVGTVFAARPARLSARRFWVRYAAEATGALTLDAGAVRAVVRQRRSLLAAGITAVSGRFCGGDVVELRAPDAAMVARGVVAYDASELATMVGRSTSELPGELRRPVVHADDLVAVSAKQAKQV.

ATP is bound at residue K18. Residues S58, D145, and N157 each coordinate substrate. ATP-binding positions include 177 to 178 and 218 to 224; these read SD and TGGMASK. The region spanning 280–358 is the PUA domain; sequence TGALTLDAGA…SELPGELRRP (79 aa).

This sequence belongs to the glutamate 5-kinase family.

The protein localises to the cytoplasm. It carries out the reaction L-glutamate + ATP = L-glutamyl 5-phosphate + ADP. It participates in amino-acid biosynthesis; L-proline biosynthesis; L-glutamate 5-semialdehyde from L-glutamate: step 1/2. In terms of biological role, catalyzes the transfer of a phosphate group to glutamate to form L-glutamate 5-phosphate. The polypeptide is Glutamate 5-kinase (Mycobacterium tuberculosis (strain CDC 1551 / Oshkosh)).